Reading from the N-terminus, the 196-residue chain is Lipoprotein signal peptidase (196 aa).

The segment at 1-24 (MAEAERIIGMPENPDVDGTDEGGS) is disordered. 3 helical membrane-spanning segments follow: residues 40–60 (ILALLSVAVVAYLLDLGSKML), 92–112 (IGEAFTVIFTIIATGVIVVIF), and 118–138 (LYSLPWAIALGLLLGGALGNL). Catalysis depends on residues Asp155 and Asp169. Residues 164 to 184 (VFNLADSAIVCGGILIVILSF) traverse the membrane as a helical segment.

The protein belongs to the peptidase A8 family.

It localises to the cell membrane. The catalysed reaction is Release of signal peptides from bacterial membrane prolipoproteins. Hydrolyzes -Xaa-Yaa-Zaa-|-(S,diacylglyceryl)Cys-, in which Xaa is hydrophobic (preferably Leu), and Yaa (Ala or Ser) and Zaa (Gly or Ala) have small, neutral side chains.. The protein operates within protein modification; lipoprotein biosynthesis (signal peptide cleavage). Functionally, this protein specifically catalyzes the removal of signal peptides from prolipoproteins. This is Lipoprotein signal peptidase from Streptomyces griseus subsp. griseus (strain JCM 4626 / CBS 651.72 / NBRC 13350 / KCC S-0626 / ISP 5235).